A 154-amino-acid polypeptide reads, in one-letter code: C-type lectin 16 (154 aa).

The signal sequence occupies residues 1–20 (MALSLYLIAVICSLVGFTAS). The 126-residue stretch at 27-152 (DNRFCFPNVV…CASMRRFVCE (126 aa)) folds into the C-type lectin domain. Cystine bridges form between cysteine 46–cysteine 151 and cysteine 123–cysteine 143.

(Microbial infection) Interacts with non-structural protein 1 of dengue virus type 2. Interacts with envelope protein E of dengue virus type 2. Female salivary gland (at protein level). Not detected in female carcass without salivary glands (at protein level). Not detected in male tissues (at protein level).

The protein localises to the secreted. Its function is as follows. Putative lectin. May have a regulatory role in mosquito immunity. Probably suppresses replication of dengue virus type 2 in mosquito salivary glands. This Aedes aegypti (Yellowfever mosquito) protein is C-type lectin 16.